Here is a 347-residue protein sequence, read N- to C-terminus: NADH-ubiquinone oxidoreductase chain 2 (347 aa).

10 consecutive transmembrane segments (helical) span residues 3–23 (PLIF…TMIS), 26–46 (WLLI…IIMM), 67–87 (SMLL…WTIM), 96–116 (YMMT…FWVP), 149–169 (LNLN…GWGG), 178–198 (IMAY…MYNT), 200–220 (LMML…ALFI), 239–259 (ILTT…PLSG), 274–294 (NMLL…YFYM), and 325–345 (LSPT…MMLI).

The protein belongs to the complex I subunit 2 family. Core subunit of respiratory chain NADH dehydrogenase (Complex I) which is composed of 45 different subunits. Interacts with TMEM242.

It localises to the mitochondrion inner membrane. It catalyses the reaction a ubiquinone + NADH + 5 H(+)(in) = a ubiquinol + NAD(+) + 4 H(+)(out). In terms of biological role, core subunit of the mitochondrial membrane respiratory chain NADH dehydrogenase (Complex I) which catalyzes electron transfer from NADH through the respiratory chain, using ubiquinone as an electron acceptor. Essential for the catalytic activity and assembly of complex I. This Dasypus novemcinctus (Nine-banded armadillo) protein is NADH-ubiquinone oxidoreductase chain 2.